Here is a 382-residue protein sequence, read N- to C-terminus: D-galactonate dehydratase (382 aa).

A Mg(2+)-binding site is contributed by Asp-183. Residue His-185 is the Proton donor of the active site. The Mg(2+) site is built by Glu-209 and Glu-235. The active-site Proton acceptor is His-285.

Belongs to the mandelate racemase/muconate lactonizing enzyme family. GalD subfamily. Mg(2+) is required as a cofactor.

The catalysed reaction is D-galactonate = 2-dehydro-3-deoxy-D-galactonate + H2O. Its pathway is carbohydrate acid metabolism; D-galactonate degradation; D-glyceraldehyde 3-phosphate and pyruvate from D-galactonate: step 1/3. Catalyzes the dehydration of D-galactonate to 2-keto-3-deoxy-D-galactonate. This chain is D-galactonate dehydratase, found in Verminephrobacter eiseniae (strain EF01-2).